Consider the following 416-residue polypeptide: tRNA(Met) cytidine acetate ligase (416 aa).

Residues 7–20 (VAEYNPFHNGHLYL), G102, N166, and R191 each bind ATP.

It belongs to the TmcAL family.

The protein localises to the cytoplasm. The catalysed reaction is cytidine(34) in elongator tRNA(Met) + acetate + ATP = N(4)-acetylcytidine(34) in elongator tRNA(Met) + AMP + diphosphate. Its function is as follows. Catalyzes the formation of N(4)-acetylcytidine (ac(4)C) at the wobble position of elongator tRNA(Met), using acetate and ATP as substrates. First activates an acetate ion to form acetyladenylate (Ac-AMP) and then transfers the acetyl group to tRNA to form ac(4)C34. This Syntrophomonas wolfei subsp. wolfei (strain DSM 2245B / Goettingen) protein is tRNA(Met) cytidine acetate ligase.